A 394-amino-acid polypeptide reads, in one-letter code: Aromatic aminotransferase ISS1 (394 aa).

The residue at position 2 (Gly-2) is an N-acetylglycine. Residue Gly-38 coordinates substrate. Residues Tyr-64, Ala-98 to Asn-99, Tyr-123, Asn-176, Tyr-207, and Ser-230 to Ser-232 contribute to the pyridoxal 5'-phosphate site. Residues Tyr-123 and Asn-176 each contribute to the substrate site. An N6-(pyridoxal phosphate)lysine modification is found at Lys-233. Residue Arg-241 coordinates pyridoxal 5'-phosphate. Positions 362 and 374 each coordinate substrate.

It belongs to the class-I pyridoxal-phosphate-dependent aminotransferase family. As to quaternary structure, homodimer. The cofactor is pyridoxal 5'-phosphate. In terms of tissue distribution, expressed in roots, cotyledons and flowers.

The protein resides in the cytoplasm. The enzyme catalyses a 2-oxocarboxylate + L-methionine = 4-methylsulfanyl-2-oxobutanoate + an L-alpha-amino acid. It carries out the reaction L-tryptophan + 2-oxoglutarate = indole-3-pyruvate + L-glutamate. The catalysed reaction is L-tyrosine + 2-oxoglutarate = 3-(4-hydroxyphenyl)pyruvate + L-glutamate. Coordinates and prevents auxin (IAA) and ethylene biosynthesis, thus regulating auxin homeostasis in young seedlings. Shows aminotransferase activity with methionine; can use the ethylene biosynthetic intermediate L-methionine (L-Met) as an amino donor and the auxin biosynthetic intermediate, indole-3-pyruvic acid (3-IPA) as an amino acceptor to produce L-tryptophan (L-Trp) and 2-oxo-4-methylthiobutyric acid (KMBA). Can also use tryptophan (Trp), phenylalanine (Phe), and tyrosine (Tyr) as substrates. Regulates tryptophan (Trp) homeostasis and catabolism in mature plants. Also possibly involved in the metabolism of other aromatic amino acids and phenylpropanoid homeostasis. This is Aromatic aminotransferase ISS1 from Arabidopsis thaliana (Mouse-ear cress).